The primary structure comprises 245 residues: 3-deoxy-manno-octulosonate cytidylyltransferase (245 aa).

This sequence belongs to the KdsB family.

The protein resides in the cytoplasm. It catalyses the reaction 3-deoxy-alpha-D-manno-oct-2-ulosonate + CTP = CMP-3-deoxy-beta-D-manno-octulosonate + diphosphate. The protein operates within nucleotide-sugar biosynthesis; CMP-3-deoxy-D-manno-octulosonate biosynthesis; CMP-3-deoxy-D-manno-octulosonate from 3-deoxy-D-manno-octulosonate and CTP: step 1/1. It participates in bacterial outer membrane biogenesis; lipopolysaccharide biosynthesis. Activates KDO (a required 8-carbon sugar) for incorporation into bacterial lipopolysaccharide in Gram-negative bacteria. The sequence is that of 3-deoxy-manno-octulosonate cytidylyltransferase from Rhodopseudomonas palustris (strain BisB18).